Here is a 591-residue protein sequence, read N- to C-terminus: Isocitrate dehydrogenase kinase/phosphatase (591 aa).

Residues 322-328 (APGIRGL) and Lys-343 each bind ATP. Residue Asp-378 is part of the active site.

Belongs to the AceK family.

Its subcellular location is the cytoplasm. It carries out the reaction L-seryl-[isocitrate dehydrogenase] + ATP = O-phospho-L-seryl-[isocitrate dehydrogenase] + ADP + H(+). In terms of biological role, bifunctional enzyme which can phosphorylate or dephosphorylate isocitrate dehydrogenase (IDH) on a specific serine residue. This is a regulatory mechanism which enables bacteria to bypass the Krebs cycle via the glyoxylate shunt in response to the source of carbon. When bacteria are grown on glucose, IDH is fully active and unphosphorylated, but when grown on acetate or ethanol, the activity of IDH declines drastically concomitant with its phosphorylation. This Aromatoleum aromaticum (strain DSM 19018 / LMG 30748 / EbN1) (Azoarcus sp. (strain EbN1)) protein is Isocitrate dehydrogenase kinase/phosphatase.